We begin with the raw amino-acid sequence, 974 residues long: Membrane-associated phosphatidylinositol transfer protein 3 (974 aa).

Phosphoserine is present on residues Ser30, Ser31, Ser109, Ser295, Ser298, Ser321, Ser343, and Ser495. Residues Cys310–Thr347 are disordered. Residues Leu312 to Val325 show a composition bias toward polar residues. The DDHD domain maps to Phe390–Arg594. The interval Pro497 to Ala535 is disordered. Over residues Lys520–Ser533 the composition is skewed to low complexity. Phosphoserine is present on residues Ser612, Ser907, Ser928, and Ser946. Positions Met927 to Pro974 are disordered.

It belongs to the PtdIns transfer protein family. PI transfer class IIA subfamily. Interacts with PTK2B via its C-terminus.

Its subcellular location is the endomembrane system. In terms of biological role, catalyzes the transfer of phosphatidylinositol and phosphatidylcholine between membranes (in vitro). Binds calcium ions. This chain is Membrane-associated phosphatidylinositol transfer protein 3 (Pitpnm3), found in Mus musculus (Mouse).